We begin with the raw amino-acid sequence, 330 residues long: Phosphate acyltransferase (330 aa).

This sequence belongs to the PlsX family. Homodimer. Probably interacts with PlsY.

Its subcellular location is the cytoplasm. It catalyses the reaction a fatty acyl-[ACP] + phosphate = an acyl phosphate + holo-[ACP]. Its pathway is lipid metabolism; phospholipid metabolism. In terms of biological role, catalyzes the reversible formation of acyl-phosphate (acyl-PO(4)) from acyl-[acyl-carrier-protein] (acyl-ACP). This enzyme utilizes acyl-ACP as fatty acyl donor, but not acyl-CoA. In Bacillus thuringiensis (strain Al Hakam), this protein is Phosphate acyltransferase.